The chain runs to 173 residues: MHVDIVPVGDLPAVVKREASSGLRSVYDCEVTIHDSQPVPDGAYDSGRDQYRAEEFIELASRVGNGEKNIAITDTDLYYRRRNYVFGLAYLSGKGSVISTHRLQTSSDGGFSEKSAGDIFADRVRKEVVHEVGHTLGLEHCDNSRCVMNFSPTVREVDVKEENLCGSCQRQIL.

Position 130 (His130) interacts with Zn(2+). The active-site Proton acceptor is the Glu131. Residues His134, His140, Cys141, Cys146, Cys165, and Cys168 each contribute to the Zn(2+) site.

It belongs to the peptidase M54 family. Monomer. Zn(2+) serves as cofactor.

Probable zinc metalloprotease whose natural substrate is unknown. This is Archaemetzincin from Natronomonas pharaonis (strain ATCC 35678 / DSM 2160 / CIP 103997 / JCM 8858 / NBRC 14720 / NCIMB 2260 / Gabara) (Halobacterium pharaonis).